The primary structure comprises 313 residues: Ribosomal RNA small subunit methyltransferase H (313 aa).

Residues 35 to 37 (GGH), D55, F79, D100, and Q107 each bind S-adenosyl-L-methionine.

It belongs to the methyltransferase superfamily. RsmH family.

It localises to the cytoplasm. The enzyme catalyses cytidine(1402) in 16S rRNA + S-adenosyl-L-methionine = N(4)-methylcytidine(1402) in 16S rRNA + S-adenosyl-L-homocysteine + H(+). In terms of biological role, specifically methylates the N4 position of cytidine in position 1402 (C1402) of 16S rRNA. In Burkholderia pseudomallei (strain 1106a), this protein is Ribosomal RNA small subunit methyltransferase H.